The primary structure comprises 258 residues: Acyl-[acyl-carrier-protein]--UDP-N-acetylglucosamine O-acyltransferase (258 aa).

This sequence belongs to the transferase hexapeptide repeat family. LpxA subfamily. Homotrimer.

Its subcellular location is the cytoplasm. It catalyses the reaction a (3R)-hydroxyacyl-[ACP] + UDP-N-acetyl-alpha-D-glucosamine = a UDP-3-O-[(3R)-3-hydroxyacyl]-N-acetyl-alpha-D-glucosamine + holo-[ACP]. Its pathway is glycolipid biosynthesis; lipid IV(A) biosynthesis; lipid IV(A) from (3R)-3-hydroxytetradecanoyl-[acyl-carrier-protein] and UDP-N-acetyl-alpha-D-glucosamine: step 1/6. Involved in the biosynthesis of lipid A, a phosphorylated glycolipid that anchors the lipopolysaccharide to the outer membrane of the cell. The polypeptide is Acyl-[acyl-carrier-protein]--UDP-N-acetylglucosamine O-acyltransferase (Pseudomonas entomophila (strain L48)).